A 295-amino-acid polypeptide reads, in one-letter code: Probable phosphoglycerate mutase PMU1 (295 aa).

The active-site Tele-phosphohistidine intermediate is the His61. The active-site Proton donor/acceptor is Glu170.

Belongs to the phosphoglycerate mutase family.

The protein localises to the cytoplasm. Its subcellular location is the nucleus. Its function is as follows. Probable phosphomutase that may have a function related to the manipulation of phosphate groups on carbohydrates. Reduces trehalose-6-phosphate levels when overexpressed in TPS2-deleted cells. Reduces 5'-Phosphoribosyl-4-carboxamide-5-aminoimidazole (AICAR) levels, a metabolic intermediate at the crossroads between AMP and histidine biosynthesis pathways, when overexpressed in a ADE3-ADE16-ADE17 triple deletant. This chain is Probable phosphoglycerate mutase PMU1, found in Saccharomyces cerevisiae (strain ATCC 204508 / S288c) (Baker's yeast).